The chain runs to 563 residues: O-fucosyltransferase 14 (563 aa).

The segment covering 1–16 (MVKVSSSTTSSSSSSS) has biased composition (low complexity). The interval 1 to 25 (MVKVSSSTTSSSSSSSPDEESDLQN) is disordered. Residues 73–93 (IFIFLPIVIILIYLSTDFSNY) traverse the membrane as a helical; Signal-anchor for type II membrane protein segment. Asn135, Asn140, and Asn339 each carry an N-linked (GlcNAc...) asparagine glycan. Residues 412–414 (HFR) and 528–529 (TF) each bind substrate.

Belongs to the glycosyltransferase GT106 family.

The protein localises to the membrane. It participates in glycan metabolism. The sequence is that of O-fucosyltransferase 14 from Arabidopsis thaliana (Mouse-ear cress).